The sequence spans 387 residues: 3-ketoacyl-CoA thiolase (387 aa).

The active-site Acyl-thioester intermediate is cysteine 91. Residues histidine 343 and cysteine 373 each act as proton acceptor in the active site.

Belongs to the thiolase-like superfamily. Thiolase family. As to quaternary structure, heterotetramer of two alpha chains (FadB) and two beta chains (FadA).

The protein localises to the cytoplasm. The catalysed reaction is an acyl-CoA + acetyl-CoA = a 3-oxoacyl-CoA + CoA. It participates in lipid metabolism; fatty acid beta-oxidation. In terms of biological role, catalyzes the final step of fatty acid oxidation in which acetyl-CoA is released and the CoA ester of a fatty acid two carbons shorter is formed. The chain is 3-ketoacyl-CoA thiolase from Aliivibrio fischeri (strain ATCC 700601 / ES114) (Vibrio fischeri).